The primary structure comprises 157 residues: MSPPAEIQADTLKRFIAGWGGWTMESFFATLSDDFTQKPLPLSCGEPARGREQLYPLLSSLMTMMTNFKLTIHNTIHDPSNKAAVVYAVADGDTPFGPYHNEQAVFIWFNSKGDKVDRIEELFDTAFMAEFKPKFKKWALENPGAAAGRPPPANTST.

The protein belongs to the avfA family.

The protein operates within secondary metabolite biosynthesis. In terms of biological role, monooxygenase; part of the ergochrome gene cluster responsible for the typical purple-black color of the ergot sclerotia. The ergochrome gene cluster produces several ergot pigments including the yellow ergochrome secalonic acid and its derivatives, as well as the red anthraquinones endocrocin and clavorubin. The pathway begins with the synthesis of atrochrysone thioester by the polyketide synthase (PKS) CPUR_05437. The atrochrysone carboxyl ACP thioesterase CPUR_05436 then breaks the thioester bond and releases the atrochrysone carboxylic acid from CPUR_05437. The atrochrysone carboxylic acid is then converted to atrochrysone which is further transformed into emodin anthrone. The next step is performed by the anthrone oxygenase CPUR_05434 that catalyzes the oxidation of emodinanthrone to emodin. Emodin is further modified to yield monodictyphenone via several steps involving CPUR_05427, CPUR_05428, CPUR_05429 and CPUR_05430. The short chain dehydrogenase/reductase CPUR_05418 then catalyzes the C-5 ketoreduction to give the xanthone skeleton of the monomeric units. Ergochromes formation requires further dimerization steps of different xanthone units, probably catalyzed by the cytochrome P450 monooxygenase CPUR_05419. CPUR_05425, CPUR_05426 and CPUR_05431 are unique to Claviceps, thus it is likely that they are involved in further modification of xanthone units or in their dimerization. The yellow ergochromes and the red anthraquinone pigments endocrocin and clavorubin are products from the same PKS derived precursors and the latter are likely shunt products in the pathway of xanthone biosynthesis. It is proposed that atrochrysone carboxylic acid released from the PKS CPUR_05437 can also be converted to endocrocin anthrone which is further oxidized into endocrocin by CPUR_05435. Endocrocin could be then modified to clavorubin, possibly by CPUR_05423 and CPUR_05431. Clavorubin is the principal anthraquinone metabolite produced by the cluster with a much higher yield compared to endocrocin. In Claviceps purpurea (strain 20.1) (Ergot fungus), this protein is Monooxygenase CPUR_05417.